Consider the following 416-residue polypeptide: Hemagglutinin-esterase (416 aa).

Residues 1-14 (MLSLILFFPSFAFA) form the signal peptide. Residues 4–121 (LILFFPSFAF…GVDSYMELKT (118 aa)) form an esterase domain first part region. The Virion surface segment spans residues 15–393 (VTPVTPYFGP…ESVDVISSSY (379 aa)). Residue S37 is the Nucleophile of the active site. Residues C41 and C57 are joined by a disulfide bond. Residues N59 and N76 are each glycosylated (N-linked (GlcNAc...) asparagine; by host). 5 disulfide bridges follow: C88/C136, C108/C156, C192/C273, C200/C246, and C206/C213. Residues 122 to 263 (SFNIKLNQMA…GTHNASIVGN (142 aa)) form a receptor binding region. N-linked (GlcNAc...) asparagine; by host glycosylation is found at N257, N278, and N294. Positions 264–379 (FLFYPTKSYC…SCPQYVKLFD (116 aa)) are esterase domain second part. An intrachain disulfide couples C304 to C309. N-linked (GlcNAc...) asparagine; by host glycosylation occurs at N322. The active-site Charge relay system is H328. N-linked (GlcNAc...) asparagine; by host glycosylation occurs at N343. C346 and C371 are joined by a disulfide. A helical transmembrane segment spans residues 394–414 (FVATWVLLVVVVILIFVIISF). Residues 415-416 (FC) lie on the Intravirion side of the membrane.

This sequence belongs to the influenza type C/coronaviruses hemagglutinin-esterase family. In terms of assembly, homodimer. N-glycosylated.

Its subcellular location is the virion membrane. It is found in the host cell membrane. The catalysed reaction is N-acetyl-9-O-acetylneuraminate + H2O = N-acetylneuraminate + acetate + H(+). The enzyme catalyses N-acetyl-4-O-acetylneuraminate + H2O = N-acetylneuraminate + acetate + H(+). Functionally, structural protein that makes short spikes at the surface of the virus. Contains receptor binding and receptor-destroying activities. Mediates de-O-acetylation of N-acetyl-9-O-acetylneuraminic acid, which is probably the receptor determinant recognized by the virus on the surface of erythrocytes and susceptible cells. This receptor-destroying activity is important for virus release as it probably helps preventing self-aggregation and ensures the efficient spread of the progeny virus from cell to cell. May serve as a secondary viral attachment protein for initiating infection, the spike protein being the major one. Seems to be a 'luxury' protein that is not absolutely necessary for virus infection in culture. However, its presence in the virus may alter its pathogenicity. May become a target for both the humoral and the cellular branches of the immune system. This Homo sapiens (Human) protein is Hemagglutinin-esterase (HE).